The sequence spans 151 residues: Ribosome maturation factor RimP (151 aa).

Belongs to the RimP family.

The protein localises to the cytoplasm. Required for maturation of 30S ribosomal subunits. The protein is Ribosome maturation factor RimP of Saccharophagus degradans (strain 2-40 / ATCC 43961 / DSM 17024).